The sequence spans 420 residues: MNKAIASKILITLGFLFLYRVLAYIPIPGVDLAAIKAFFDSNSNNALGLFNMFSGNAVSRLSIISLGIMPYITSSIIMELLSATFPNLAKMKKERDGMQKYMQIVRYLTILITLIQAVSVSVGLRSISGGANGAIMIDMQVFMIVSAFSMLTGTMLLMWIGEQITQRGVGNGISLIIFAGIVSGIPSAISGTFNLVNTGVINILMLIGIVLIVLATIFAIIYVELAERRIPISYARKVVMQNQNKRIMNYIPIKLNLSGVIPPIFASALLVFPSTILQQATSNKTLQAVADFLSPQGYAYNILMFLLIIFFAYFYSSIVFNSKDIADNLRRNGGYIPGLRPGEGTSSFLNSVASKLTLWGSLYLALISTVPWILVKAMGVPFYFGGTAVLIVVQVAIDTMKKIEAQIYMSKYKTLSAVGF.

10 helical membrane passes run 9 to 29 (ILIT…PIPG), 61 to 81 (LSII…MELL), 104 to 124 (IVRY…SVGL), 141 to 161 (VFMI…MWIG), 173 to 193 (ISLI…SGTF), 203 to 223 (ILML…IIYV), 257 to 277 (LSGV…STIL), 300 to 320 (YNIL…SIVF), 355 to 375 (KLTL…WILV), and 377 to 397 (AMGV…QVAI).

Belongs to the SecY/SEC61-alpha family. In terms of assembly, component of the Sec protein translocase complex. Heterotrimer consisting of SecY, SecE and SecG subunits. The heterotrimers can form oligomers, although 1 heterotrimer is thought to be able to translocate proteins. Interacts with the ribosome. Interacts with SecDF, and other proteins may be involved. Interacts with SecA.

Its subcellular location is the cell inner membrane. Functionally, the central subunit of the protein translocation channel SecYEG. Consists of two halves formed by TMs 1-5 and 6-10. These two domains form a lateral gate at the front which open onto the bilayer between TMs 2 and 7, and are clamped together by SecE at the back. The channel is closed by both a pore ring composed of hydrophobic SecY resides and a short helix (helix 2A) on the extracellular side of the membrane which forms a plug. The plug probably moves laterally to allow the channel to open. The ring and the pore may move independently. In Helicobacter pylori (strain ATCC 700392 / 26695) (Campylobacter pylori), this protein is Protein translocase subunit SecY.